The following is a 342-amino-acid chain: Aristolochene synthase (342 aa).

Positions 115, 244, 248, and 252 each coordinate Mg(2+). (2E,6E)-farnesyl diphosphate is bound by residues Arg-340 and Tyr-341.

Belongs to the terpene synthase family. As to quaternary structure, homodimer. The cofactor is Mg(2+).

The enzyme catalyses (2E,6E)-farnesyl diphosphate = (+)-aristolochene + diphosphate. The protein operates within sesquiterpene biosynthesis; aristolochene biosynthesis; aristolochene from farnesyl diphosphate: step 1/1. Its function is as follows. Aristolochene synthase; part of the gene cluster that mediates the biosynthesis of PR-toxin, a bicyclic sesquiterpene belonging to the eremophilane class and acting as a mycotoxin. The first step of the pathway is catalyzed by the aristolochene synthase which performs the cyclization of trans,trans-farnesyl diphosphate (FPP) to the bicyclic sesquiterpene aristolochene. Following the formation of aristolochene, the non-oxygenated aristolochene is converted to the trioxygenated intermediate eremofortin B, via 7-epi-neopetasone. This conversion appears to involve three enzymes, a hydroxysterol oxidase-like enzyme, the quinone-oxidase prx3 that forms the quinone-type-structure in the bicyclic nucleus of aristolochene with the C8-oxo group and the C-3 hydroxyl group, and the P450 monooxygenase ORF6 that introduces the epoxide at the double bond between carbons 1 and 2. No monoxy or dioxy-intermediates have been reported to be released to the broth, so these three early oxidative reactions may be coupled together. Eremofortin B is further oxidized by another P450 monooxygenase, that introduces a second epoxide between carbons 7 and 11 prior to acetylation to eremofortin A by the acetyltransferase ORF8. The second epoxidation may be performed by a second P450 monooxygenase. After the acetylation step, eremofortin A is converted to eremofortin C and then to PR-toxin. First the conversion of eremofortin A to eremofortin C proceeds by oxidation of the side chain of the molecule at C-12 and is catalyzed by the short-chain oxidoreductase prx1. The cytochrome P450 monooxygenase ORF5 also plays a role in this step. The primary alcohol formed at C-12 is finally oxidized by the short-chain alcohol dehydrogenase prx4 that forms PR-toxin. This Penicillium roqueforti (strain FM164) protein is Aristolochene synthase.